A 517-amino-acid chain; its full sequence is Crotonobetaine/carnitine--CoA ligase (517 aa).

The protein belongs to the ATP-dependent AMP-binding enzyme family.

The catalysed reaction is 4-(trimethylamino)butanoate + ATP + CoA = 4-(trimethylamino)butanoyl-CoA + AMP + diphosphate. It catalyses the reaction crotonobetaine + ATP + CoA = crotonobetainyl-CoA + AMP + diphosphate. The enzyme catalyses (R)-carnitine + ATP + CoA = (R)-carnitinyl-CoA + AMP + diphosphate. The protein operates within amine and polyamine metabolism; carnitine metabolism. Catalyzes the transfer of CoA to carnitine, generating the initial carnitinyl-CoA needed for the CaiB reaction cycle. Also has activity toward crotonobetaine and gamma-butyrobetaine. The protein is Crotonobetaine/carnitine--CoA ligase of Escherichia coli O17:K52:H18 (strain UMN026 / ExPEC).